The primary structure comprises 100 residues: NADH-quinone oxidoreductase subunit K (100 aa).

The next 3 membrane-spanning stretches (helical) occupy residues 2-22, 28-48, and 64-84; these read IPLS…VAGF, IIVM…NLVA, and FVIT…ICLF.

The protein belongs to the complex I subunit 4L family. In terms of assembly, NDH-1 is composed of 14 different subunits. Subunits NuoA, H, J, K, L, M, N constitute the membrane sector of the complex.

Its subcellular location is the cell inner membrane. The enzyme catalyses a quinone + NADH + 5 H(+)(in) = a quinol + NAD(+) + 4 H(+)(out). NDH-1 shuttles electrons from NADH, via FMN and iron-sulfur (Fe-S) centers, to quinones in the respiratory chain. The immediate electron acceptor for the enzyme in this species is believed to be ubiquinone. Couples the redox reaction to proton translocation (for every two electrons transferred, four hydrogen ions are translocated across the cytoplasmic membrane), and thus conserves the redox energy in a proton gradient. The chain is NADH-quinone oxidoreductase subunit K from Desulfovibrio desulfuricans (strain ATCC 27774 / DSM 6949 / MB).